The sequence spans 132 residues: Small ribosomal subunit protein uS8 (132 aa).

The protein belongs to the universal ribosomal protein uS8 family. As to quaternary structure, part of the 30S ribosomal subunit. Contacts proteins S5 and S12.

In terms of biological role, one of the primary rRNA binding proteins, it binds directly to 16S rRNA central domain where it helps coordinate assembly of the platform of the 30S subunit. This Rickettsia massiliae (strain Mtu5) protein is Small ribosomal subunit protein uS8.